A 190-amino-acid chain; its full sequence is Elongation factor P-like protein (190 aa).

Belongs to the elongation factor P family.

This is Elongation factor P-like protein from Pectobacterium carotovorum subsp. carotovorum (strain PC1).